Consider the following 249-residue polypeptide: MVTVGVFSERASLTHQLGEFIVKKQDEALQKKSDFKVSVSGGSLIDALYESLVADESLSSRVQWSKWQIYFSDERIVPLTDADSNYGAFKRAVLDKLPSTSQPNVYPMDESLIGSDAESNNKIAAEYERIVPQVLDLVLLGCGPDGHTCSLFPGETHRYLLNETTKRVAWCHDSPKPPSDRITFTLPVLKDAKALCFVAEGSSKQNIMHEIFDLKNDQLPTALVNKLFGEKTSWFVNEEAFGKVQTKTF.

The protein belongs to the glucosamine/galactosamine-6-phosphate isomerase family. 6-phosphogluconolactonase subfamily.

It localises to the cytoplasm. The protein resides in the nucleus. The enzyme catalyses 6-phospho-D-glucono-1,5-lactone + H2O = 6-phospho-D-gluconate + H(+). It participates in carbohydrate degradation; pentose phosphate pathway; D-ribulose 5-phosphate from D-glucose 6-phosphate (oxidative stage): step 2/3. Functionally, hydrolysis of 6-phosphogluconolactone to 6-phosphogluconate. The protein is 6-phosphogluconolactonase 3 (SOL3) of Saccharomyces cerevisiae (strain RM11-1a) (Baker's yeast).